The chain runs to 422 residues: Putidaredoxin reductase CamA (422 aa).

Residues alanine 15, aspartate 37, lysine 50, valine 83, and arginine 134 each contribute to the FAD site. NAD(+) is bound at residue 156 to 165 (GGGYIGLEVA). FAD-binding residues include aspartate 284 and valine 302.

It belongs to the FAD-dependent oxidoreductase family. As to quaternary structure, homodimer or monomer. FAD is required as a cofactor.

The catalysed reaction is 2 reduced [2Fe-2S]-[putidaredoxin] + NAD(+) + H(+) = 2 oxidized [2Fe-2S]-[putidaredoxin] + NADH. Its pathway is terpene metabolism; (R)-camphor degradation. In terms of biological role, the oxidation of camphor by cytochrome P450-CAM CamC requires the participation of the flavoprotein, putidaredoxin reductase CamA, and the iron-sulfur protein, putidaredoxin CamB, to mediate the transfer of electrons from NADH to P450 for oxygen activation. The chain is Putidaredoxin reductase CamA from Pseudomonas putida (Arthrobacter siderocapsulatus).